The sequence spans 1010 residues: Retinoblastoma-related protein 1 (1010 aa).

Residues 1-23 form a disordered region; the sequence is MEGAAPPASSGSEVTGAGSGKVD. The interval 419–619 is domain A; it reads TPVSTAMTTA…EKGSSMYNSL (201 aa). Positions 419 to 861 are pocket; sequence TPVSTAMTTA…NEVFIPTVKP (443 aa). Residues 620–730 form a spacer region; sequence IVARPTLSAE…PAAGGELCAE (111 aa). Residues 657-679 form a disordered region; sequence LPPLPFQKQEHSPDKDEVRSPKR. Positions 664–679 are enriched in basic and acidic residues; the sequence is KQEHSPDKDEVRSPKR. Positions 731–861 are domain B; sequence TGIGVFLSKI…NEVFIPTVKP (131 aa). The interval 868–898 is disordered; that stretch reads SGTSPNKKNEEKCAADGPYPESPRLSRFPNL.

The protein belongs to the retinoblastoma protein (RB) family.

The protein localises to the nucleus. Regulator of biological processes that recruits a histone deacetylase to control gene transcription. May play a role in the entry into mitosis, negatively regulating the cell proliferation. Formation of stable complexes with geminiviridae replication-associated proteins may create a cellular environment which favors viral DNA replication. The protein is Retinoblastoma-related protein 1 (RBR1) of Oryza sativa subsp. indica (Rice).